We begin with the raw amino-acid sequence, 574 residues long: PI-PLC X domain-containing protein DDB_G0269228 (574 aa).

A disordered region spans residues Met-1–Lys-42. Residues Thr-21 to Ser-34 show a composition bias toward low complexity. The PI-PLC X-box domain maps to Gly-270 to Gly-449.

The chain is PI-PLC X domain-containing protein DDB_G0269228 from Dictyostelium discoideum (Social amoeba).